A 327-amino-acid chain; its full sequence is Phosphate acyltransferase (327 aa).

This sequence belongs to the PlsX family. Homodimer. Probably interacts with PlsY.

The protein localises to the cytoplasm. It catalyses the reaction a fatty acyl-[ACP] + phosphate = an acyl phosphate + holo-[ACP]. It functions in the pathway lipid metabolism; phospholipid metabolism. Functionally, catalyzes the reversible formation of acyl-phosphate (acyl-PO(4)) from acyl-[acyl-carrier-protein] (acyl-ACP). This enzyme utilizes acyl-ACP as fatty acyl donor, but not acyl-CoA. This Thermotoga maritima (strain ATCC 43589 / DSM 3109 / JCM 10099 / NBRC 100826 / MSB8) protein is Phosphate acyltransferase.